A 1152-amino-acid polypeptide reads, in one-letter code: P3N-PIPO polyprotein (1152 aa).

The Peptidase S30 domain maps to 292–437 (VMNQQTLTAL…HTLTHRMVQY (146 aa)). Residues His345, Asp354, and Ser388 each act as for P1 proteinase activity in the active site. Residues 489–492 (KITC) carry the Involved in interaction with stylet and aphid transmission motif. Positions 747–749 (PTK) match the Involved in virions binding and aphid transmission motif. The Peptidase C6 domain maps to 773–895 (MFVAKDGYCY…ESEMQHYRVG (123 aa)). Residues Cys781 and His854 each act as for helper component proteinase activity in the active site.

It belongs to the potyviridae P3N-PIPO polyprotein family. In terms of assembly, interacts (via PIPO domain) with host PCaP1 protein; this interaction may help to anchor the movement complex to the plasma membrane from which the complex could move to the plasmodesmata. Potyviral RNA is expressed as two polyproteins which undergo post-translational proteolytic processing. Genome polyprotein is processed by NIa-pro, P1 and HC-pro proteinases resulting in the production of at least ten individual proteins. P3N-PIPO is cleaved by P1 and HC-pro proteinases resulting in the production of three individual proteins. The P1 proteinase and the HC-pro cleave only their respective C-termini autocatalytically.

Its subcellular location is the host cell junction. It localises to the host plasmodesma. It catalyses the reaction Hydrolyzes a Gly-|-Gly bond at its own C-terminus, commonly in the sequence -Tyr-Xaa-Val-Gly-|-Gly, in the processing of the potyviral polyprotein.. Its function is as follows. Required for aphid transmission and also has proteolytic activity. Only cleaves a Gly-Gly dipeptide at its own C-terminus. Interacts with virions and aphid stylets. Acts as a suppressor of RNA-mediated gene silencing, also known as post-transcriptional gene silencing (PTGS), a mechanism of plant viral defense that limits the accumulation of viral RNAs. May have RNA-binding activity. Functionally, allows efficient cell to cell propagation, by bypassing the host cell wall barrier. Transports viral genome to neighboring plant cells directly through plasmosdesmata, without any budding. The protein is P3N-PIPO polyprotein of Carthamus tinctorius (Safflower).